Consider the following 255-residue polypeptide: Acetyl-coenzyme A carboxylase carboxyl transferase subunit alpha (255 aa).

One can recognise a CoA carboxyltransferase C-terminal domain in the interval 1–235; sequence MNIAKIVREA…KKELQTELAR (235 aa).

It belongs to the AccA family. As to quaternary structure, acetyl-CoA carboxylase is a heterohexamer composed of biotin carboxyl carrier protein (AccB), biotin carboxylase (AccC) and two subunits each of ACCase subunit alpha (AccA) and ACCase subunit beta (AccD).

Its subcellular location is the cytoplasm. The catalysed reaction is N(6)-carboxybiotinyl-L-lysyl-[protein] + acetyl-CoA = N(6)-biotinyl-L-lysyl-[protein] + malonyl-CoA. Its pathway is lipid metabolism; malonyl-CoA biosynthesis; malonyl-CoA from acetyl-CoA: step 1/1. Its function is as follows. Component of the acetyl coenzyme A carboxylase (ACC) complex. First, biotin carboxylase catalyzes the carboxylation of biotin on its carrier protein (BCCP) and then the CO(2) group is transferred by the carboxyltransferase to acetyl-CoA to form malonyl-CoA. The protein is Acetyl-coenzyme A carboxylase carboxyl transferase subunit alpha of Streptococcus pneumoniae (strain CGSP14).